We begin with the raw amino-acid sequence, 325 residues long: Adenine deaminase (325 aa).

The Zn(2+) site is built by H11, H13, and H189. Residue E192 is the Proton donor of the active site. Position 270 (D270) interacts with Zn(2+). Position 271 (D271) interacts with substrate.

It belongs to the metallo-dependent hydrolases superfamily. Adenosine and AMP deaminases family. Adenine deaminase type 2 subfamily. The cofactor is Zn(2+).

The catalysed reaction is adenine + H2O + H(+) = hypoxanthine + NH4(+). Catalyzes the hydrolytic deamination of adenine to hypoxanthine. Plays an important role in the purine salvage pathway and in nitrogen catabolism. The protein is Adenine deaminase of Agrobacterium fabrum (strain C58 / ATCC 33970) (Agrobacterium tumefaciens (strain C58)).